The chain runs to 603 residues: Sulfoacetaldehyde acetyltransferase (603 aa).

This sequence belongs to the TPP enzyme family. In terms of assembly, homodimer or homotetramer. The cofactor is Mg(2+). Requires thiamine diphosphate as cofactor.

Its subcellular location is the cytoplasm. It catalyses the reaction acetyl phosphate + sulfite + H(+) = sulfoacetaldehyde + phosphate. The protein operates within organosulfur degradation; taurine degradation via aerobic pathway; acetyl phosphate and sulfite from taurine: step 2/2. The protein is Sulfoacetaldehyde acetyltransferase (xsc) of Alcaligenes xylosoxydans xylosoxydans (Achromobacter xylosoxidans).